A 363-amino-acid chain; its full sequence is Peptide chain release factor 1 (363 aa).

Residue Gln237 is modified to N5-methylglutamine. A compositionally biased stretch (basic and acidic residues) spans 284-296 (EDEKRRSAEESTR). The interval 284–306 (EDEKRRSAEESTRRSLVASGDRS) is disordered.

It belongs to the prokaryotic/mitochondrial release factor family. In terms of processing, methylated by PrmC. Methylation increases the termination efficiency of RF1.

Its subcellular location is the cytoplasm. In terms of biological role, peptide chain release factor 1 directs the termination of translation in response to the peptide chain termination codons UAG and UAA. In Shewanella putrefaciens (strain CN-32 / ATCC BAA-453), this protein is Peptide chain release factor 1.